The primary structure comprises 261 residues: Indole-3-glycerol phosphate synthase (261 aa).

It belongs to the TrpC family.

It carries out the reaction 1-(2-carboxyphenylamino)-1-deoxy-D-ribulose 5-phosphate + H(+) = (1S,2R)-1-C-(indol-3-yl)glycerol 3-phosphate + CO2 + H2O. It functions in the pathway amino-acid biosynthesis; L-tryptophan biosynthesis; L-tryptophan from chorismate: step 4/5. This is Indole-3-glycerol phosphate synthase from Burkholderia thailandensis (strain ATCC 700388 / DSM 13276 / CCUG 48851 / CIP 106301 / E264).